The chain runs to 24 residues: Sperm protamine P3 (24 aa).

Residues 1–24 (RRRRRRRRHRRRRGRRGRRSRGRR) are disordered.

As to expression, testis.

It is found in the nucleus. The protein localises to the chromosome. Its function is as follows. Protamines substitute for histones in the chromatin of sperm during the haploid phase of spermatogenesis. They compact sperm DNA into a highly condensed, stable and inactive complex. This chain is Sperm protamine P3, found in Octopus vulgaris (Common octopus).